Here is a 384-residue protein sequence, read N- to C-terminus: Probable circularly permuted 1,3-beta-glucanase PGA52 (384 aa).

The N-terminal stretch at 1–17 (MLFSSLLVSTLVSVATA) is a signal peptide. Residues asparagine 118, asparagine 128, asparagine 170, asparagine 210, and asparagine 244 are each glycosylated (N-linked (GlcNAc...) asparagine). The ExDxxE motif motif lies at 254–259 (EFDIFE). Asparagine 262 and asparagine 318 each carry an N-linked (GlcNAc...) asparagine glycan. A lipid anchor (GPI-anchor amidated serine) is attached at serine 361. Residues 362 to 384 (GGVSYQPSFITNLLMTVLTLWVI) constitute a propeptide, removed in mature form.

Belongs to the PGA52 family.

Its subcellular location is the cell membrane. It carries out the reaction Hydrolysis of (1-&gt;3)-beta-D-glucosidic linkages in (1-&gt;3)-beta-D-glucans.. Its function is as follows. Probable circularly permuted 1,3-beta-glucanase involved in cell wall modification through beta-1,3-glucan network alterations such as increased branching or remodeling. The chain is Probable circularly permuted 1,3-beta-glucanase PGA52 (PGA52) from Candida albicans (strain SC5314 / ATCC MYA-2876) (Yeast).